A 109-amino-acid polypeptide reads, in one-letter code: Protein reprimo (109 aa).

Residues N7 and N18 are each glycosylated (N-linked (GlcNAc...) asparagine). Residues 56-76 form a helical membrane-spanning segment; the sequence is VVQIAVMCVLSLTVVFGIFFL. Phosphoserine is present on S98.

The protein belongs to the reprimo family.

The protein localises to the cytoplasm. It is found in the membrane. In terms of biological role, may be involved in the regulation of p53-dependent G2 arrest of the cell cycle. Seems to induce cell cycle arrest by inhibiting CDK1 activity and nuclear translocation of the CDC2 cyclin B1 complex. The polypeptide is Protein reprimo (Rprm) (Rattus norvegicus (Rat)).